The sequence spans 92 residues: uncharacterized protein (92 aa).

This is an uncharacterized protein from Sulfolobus spindle-shape virus 1 (SSV1).